The sequence spans 565 residues: NAD-dependent malic enzyme (565 aa).

Tyr-104 serves as the catalytic Proton donor. Arg-157 serves as a coordination point for NAD(+). Catalysis depends on Lys-175, which acts as the Proton acceptor. A divalent metal cation-binding residues include Glu-246, Asp-247, and Asp-270. NAD(+) is bound by residues Asp-270 and Asn-418.

Belongs to the malic enzymes family. In terms of assembly, homotetramer. The cofactor is Mg(2+). Mn(2+) serves as cofactor.

The enzyme catalyses (S)-malate + NAD(+) = pyruvate + CO2 + NADH. It carries out the reaction oxaloacetate + H(+) = pyruvate + CO2. This is NAD-dependent malic enzyme from Pectobacterium carotovorum subsp. carotovorum (strain PC1).